A 348-amino-acid polypeptide reads, in one-letter code: Erythronate-4-phosphate dehydrogenase (348 aa).

Positions 46 and 67 each coordinate substrate. D147 contributes to the NAD(+) binding site. The active site involves R209. An NAD(+)-binding site is contributed by D233. E238 is a catalytic residue. H255 serves as the catalytic Proton donor. G258 is a binding site for NAD(+). Y259 contributes to the substrate binding site.

Belongs to the D-isomer specific 2-hydroxyacid dehydrogenase family. PdxB subfamily. Homodimer.

It localises to the cytoplasm. The enzyme catalyses 4-phospho-D-erythronate + NAD(+) = (R)-3-hydroxy-2-oxo-4-phosphooxybutanoate + NADH + H(+). It participates in cofactor biosynthesis; pyridoxine 5'-phosphate biosynthesis; pyridoxine 5'-phosphate from D-erythrose 4-phosphate: step 2/5. Catalyzes the oxidation of erythronate-4-phosphate to 3-hydroxy-2-oxo-4-phosphonooxybutanoate. The sequence is that of Erythronate-4-phosphate dehydrogenase from Bacteroides fragilis (strain YCH46).